The sequence spans 763 residues: Thyrotropin receptor (763 aa).

The first 21 residues, 1–21, serve as a signal peptide directing secretion; the sequence is MRQTPLLQLALLLSLPRSLGG. Over 22–412 the chain is Extracellular; sequence KGCPSPPCEC…EFNPCEDIMG (391 aa). A disulfide bridge connects residues Cys31 and Cys41. N-linked (GlcNAc...) asparagine glycosylation is found at Asn77 and Asn99. LRR repeat units follow at residues 100 to 124, 125 to 150, 151 to 174, 176 to 199, 201 to 223, 225 to 248, and 264 to 288; these read LSKMTHIEIRNTRSLTYIDPGALKE, LPLLKFLGIFNTGLGVFPDLTKVYST, DVFFILEITDNPYMTSIPANAFQG, CNETLTLKLYNNGFTSIQGHAFNG, KLDAVYLNKNKYLTAIDQDAFGG, YSGPTLLDVSYTSVTALPSKGLEH, and PLTLSFLHLTRADLSYPSHCCAFKN. Asn177 and Asn198 each carry an N-linked (GlcNAc...) asparagine glycan. An N-linked (GlcNAc...) asparagine glycan is attached at Asn302. Tyr384 bears the Sulfotyrosine mark. The helical transmembrane segment at 413–440 threads the bilayer; the sequence is YKFLRIVVWFVSLLALLGNVFVLIILLT. Topologically, residues 441–449 are cytoplasmic; that stretch reads SHYKLTVPR. The chain crosses the membrane as a helical span at residues 450–472; that stretch reads FLMCNLAFADFCMGMYLLLIASV. The Extracellular portion of the chain corresponds to 473-493; sequence DLYTHSEYYNHAIDWQTGPGC. Residues Cys493 and Cys568 are joined by a disulfide bond. A helical membrane pass occupies residues 494 to 516; that stretch reads NAAGFFTVFASELSVYTLTVITL. Topologically, residues 517–536 are cytoplasmic; sequence ERWYAITFAMRLDRKMRLRH. A helical membrane pass occupies residues 537 to 559; it reads AYAIMVGGWVCCFLLALLPLVGI. Over 560–579 the chain is Extracellular; it reads SSYAKVSICLPMDTETPLAL. The helical transmembrane segment at 580–601 threads the bilayer; the sequence is AYIILVLLLNIVAFIIVCSCYV. The Cytoplasmic segment spans residues 602–624; sequence KIYITVRNPQYNTGDKDTKIAKR. Residues 625 to 648 form a helical membrane-spanning segment; the sequence is MAVLIFTDFMCMAPISFYALSALM. Over 649-659 the chain is Extracellular; it reads NKPLITVTNSK. A helical transmembrane segment spans residues 660–681; that stretch reads ILLVLFYPLNSCANPFLYAIFT. Residues 682–763 are Cytoplasmic-facing; that stretch reads KTFQRDVFIL…ISKEYNQTVL (82 aa). Positions 761–763 match the PDZ-binding motif; it reads TVL.

The protein belongs to the G-protein coupled receptor 1 family. FSH/LSH/TSH subfamily. In terms of assembly, interacts with heterodimer GPHA2:GPHB5; this interaction stimulates cAMP production. Interacts (via the PDZ-binding motif) with SCRIB; regulates TSHR trafficking and function. In terms of processing, glycosylated. Sulfated. Sulfation on Tyr-384 plays a role in thyrotropin receptor binding and activation.

Its subcellular location is the cell membrane. It is found in the basolateral cell membrane. In terms of biological role, receptor for the thyroid-stimulating hormone (TSH) or thyrotropin. Also acts as a receptor for the heterodimeric glycoprotein hormone (GPHA2:GPHB5) or thyrostimulin. The activity of this receptor is mediated by G proteins which activate adenylate cyclase. Plays a central role in controlling thyroid cell metabolism. This Felis catus (Cat) protein is Thyrotropin receptor (TSHR).